We begin with the raw amino-acid sequence, 430 residues long: Bifunctional protein GlmU (430 aa).

The tract at residues 1–227 (MISKTHTFVI…GEEATGINNR (227 aa)) is pyrophosphorylase. Residues Lys25, Gln74, 79 to 80 (GT), 104 to 106 (YGD), Gly140, Glu154, Asn168, and Asn225 each bind UDP-N-acetyl-alpha-D-glucosamine. Asp106 contacts Mg(2+). Residue Asn225 coordinates Mg(2+). The tract at residues 228 to 248 (NDLIKAEFYFQENKRKIFTDS) is linker. The tract at residues 249–430 (GVTLVAPETV…REKQVTKRIK (182 aa)) is N-acetyltransferase. 2 residues coordinate UDP-N-acetyl-alpha-D-glucosamine: Arg314 and Lys332. Catalysis depends on His344, which acts as the Proton acceptor. 2 residues coordinate UDP-N-acetyl-alpha-D-glucosamine: Tyr347 and Asn358. Acetyl-CoA-binding positions include Ala361, 367 to 368 (NY), Ala404, and Arg421.

The protein in the N-terminal section; belongs to the N-acetylglucosamine-1-phosphate uridyltransferase family. This sequence in the C-terminal section; belongs to the transferase hexapeptide repeat family. As to quaternary structure, homotrimer. It depends on Mg(2+) as a cofactor.

It localises to the cytoplasm. It carries out the reaction alpha-D-glucosamine 1-phosphate + acetyl-CoA = N-acetyl-alpha-D-glucosamine 1-phosphate + CoA + H(+). The catalysed reaction is N-acetyl-alpha-D-glucosamine 1-phosphate + UTP + H(+) = UDP-N-acetyl-alpha-D-glucosamine + diphosphate. Its pathway is nucleotide-sugar biosynthesis; UDP-N-acetyl-alpha-D-glucosamine biosynthesis; N-acetyl-alpha-D-glucosamine 1-phosphate from alpha-D-glucosamine 6-phosphate (route II): step 2/2. It functions in the pathway nucleotide-sugar biosynthesis; UDP-N-acetyl-alpha-D-glucosamine biosynthesis; UDP-N-acetyl-alpha-D-glucosamine from N-acetyl-alpha-D-glucosamine 1-phosphate: step 1/1. It participates in bacterial outer membrane biogenesis; LPS lipid A biosynthesis. In terms of biological role, catalyzes the last two sequential reactions in the de novo biosynthetic pathway for UDP-N-acetylglucosamine (UDP-GlcNAc). The C-terminal domain catalyzes the transfer of acetyl group from acetyl coenzyme A to glucosamine-1-phosphate (GlcN-1-P) to produce N-acetylglucosamine-1-phosphate (GlcNAc-1-P), which is converted into UDP-GlcNAc by the transfer of uridine 5-monophosphate (from uridine 5-triphosphate), a reaction catalyzed by the N-terminal domain. This Wolbachia pipientis wMel protein is Bifunctional protein GlmU.